Here is an 84-residue protein sequence, read N- to C-terminus: Small ribosomal subunit protein uS17 (84 aa).

This sequence belongs to the universal ribosomal protein uS17 family. In terms of assembly, part of the 30S ribosomal subunit.

Its function is as follows. One of the primary rRNA binding proteins, it binds specifically to the 5'-end of 16S ribosomal RNA. The chain is Small ribosomal subunit protein uS17 from Aliivibrio fischeri (strain ATCC 700601 / ES114) (Vibrio fischeri).